We begin with the raw amino-acid sequence, 136 residues long: Biopolymer transport protein exbD2 (136 aa).

At 1–23 the chain is on the cytoplasmic side; sequence MAFSTGGNRGPMADINVTPLVDV. The helical transmembrane segment at 24–44 threads the bilayer; it reads MLVLLIIFIVTAPIMTYPIAV. Residues 45 to 136 lie on the Periplasmic side of the membrane; it reads DLPQRVLNPP…SQMKKIGFMQ (92 aa).

Belongs to the ExbD/TolR family. The accessory proteins ExbB and ExbD seem to form a complex with TonB.

It localises to the cell inner membrane. Involved in the TonB-dependent energy-dependent transport of various receptor-bound substrates. The sequence is that of Biopolymer transport protein exbD2 (exbD2) from Xanthomonas campestris pv. campestris (strain ATCC 33913 / DSM 3586 / NCPPB 528 / LMG 568 / P 25).